Reading from the N-terminus, the 177-residue chain is ATP synthase subunit delta (177 aa).

This sequence belongs to the ATPase delta chain family. In terms of assembly, F-type ATPases have 2 components, F(1) - the catalytic core - and F(0) - the membrane proton channel. F(1) has five subunits: alpha(3), beta(3), gamma(1), delta(1), epsilon(1). F(0) has three main subunits: a(1), b(2) and c(10-14). The alpha and beta chains form an alternating ring which encloses part of the gamma chain. F(1) is attached to F(0) by a central stalk formed by the gamma and epsilon chains, while a peripheral stalk is formed by the delta and b chains.

The protein resides in the cell membrane. Functionally, f(1)F(0) ATP synthase produces ATP from ADP in the presence of a proton or sodium gradient. F-type ATPases consist of two structural domains, F(1) containing the extramembraneous catalytic core and F(0) containing the membrane proton channel, linked together by a central stalk and a peripheral stalk. During catalysis, ATP synthesis in the catalytic domain of F(1) is coupled via a rotary mechanism of the central stalk subunits to proton translocation. In terms of biological role, this protein is part of the stalk that links CF(0) to CF(1). It either transmits conformational changes from CF(0) to CF(1) or is implicated in proton conduction. This Buchnera aphidicola subsp. Acyrthosiphon pisum (strain 5A) protein is ATP synthase subunit delta.